Consider the following 174-residue polypeptide: Dehydratase AgnL8 (174 aa).

Substrate contacts are provided by tyrosine 24, tyrosine 44, and phenylalanine 47. Residues histidine 79 and histidine 104 contribute to the active site.

It belongs to the scytalone dehydratase family. Homotrimer. Each subunit contains an active site, located in the central part of the hydrophobic core of the monomer, which functions independently.

It functions in the pathway secondary metabolite biosynthesis. Dehydratase; part of the gene cluster that mediates the biosynthesis of agnestins, dihydroxy-xanthone metabolites. The pathway begins with the assembly and cyclization of atrochrysone thioester by the non-reducing polyketide synthase Agnpks1. The atrochrysone carboxyl ACP thioesterase AgnL7 then breaks the thioester bond and releases the atrochrysone carboxylic acid as the first enzyme-free intermediate. The decarboxylase AgnL1 then catalyzes the concerted decarboxylation-elimination required to convert atochrysone carboxylic acid into emodin anthrone, which is further oxidized to emodin by the anthrone oxygenase AgnL2. Emodin then undergoes reduction catalyzed by the oxidoreductase AgnL4 to yield the dihydroquinone tautomer which is the substrate for reduction by the short chain dehydrogenase AgnL6 reduction to produce hydroxyketone, followed by AgnL8 dehydration and likely spontaneous autoxidation to chrysophanol. Baeyer-Villiger oxidation by the oxidase AgnL3 leads to monodictyphenone via cleavage of the C-10/C-10a bond of chrysophanol. Alternative cleavage at the C-4a/C-10 bond of chrysophanol also leads to the formation some cephalone F. Further conversion to agnestins A and B, requires reduction to dihydro-monodictyphenone, oxidation to agnestin C probably via an epoxide, and rearrangement to either agnestin A or agnestin B directly, although agnestin A or agnestin B can also interconvert. Within the cluster, AgnR1 is the only unassigned oxidoreductase present which could be involved in this conversion. However, AgnR1 seems not to be involved in this step, and thus genes involved in the proposed oxidation/reduction may be located elsewhere on the genome. Further agnestin A derivatives are probably formed by spontaneous decarboxylations, dehydrations and methanolysis reactions. The chain is Dehydratase AgnL8 from Paecilomyces divaricatus (Penicillium divaricatum).